The sequence spans 293 residues: ATP synthase gamma chain (293 aa).

The protein belongs to the ATPase gamma chain family. F-type ATPases have 2 components, CF(1) - the catalytic core - and CF(0) - the membrane proton channel. CF(1) has five subunits: alpha(3), beta(3), gamma(1), delta(1), epsilon(1). CF(0) has three main subunits: a, b and c.

The protein resides in the cell membrane. Its function is as follows. Produces ATP from ADP in the presence of a proton gradient across the membrane. The gamma chain is believed to be important in regulating ATPase activity and the flow of protons through the CF(0) complex. In Streptococcus sanguinis, this protein is ATP synthase gamma chain.